A 246-amino-acid chain; its full sequence is Probable transcriptional regulatory protein ESA_01378 (246 aa).

The protein belongs to the TACO1 family.

Its subcellular location is the cytoplasm. This chain is Probable transcriptional regulatory protein ESA_01378, found in Cronobacter sakazakii (strain ATCC BAA-894) (Enterobacter sakazakii).